Reading from the N-terminus, the 553-residue chain is RNA N(6)-adenosine-methyltransferase METTL16 (553 aa).

The interval 17 to 20 (PPDF) is RNA-binding. S-adenosyl-L-methionine is bound by residues arginine 82, glycine 110, serine 114, glutamate 133, threonine 164, and asparagine 184. Residues 163-167 (KTLLM) form a K-loop region. 3 RNA-binding regions span residues 199–211 (SRNSRRPPPSSVN), 250–254 (GKKCS), and 277–283 (QGRTMRW). Residues 289–400 (FYDDVTVPSP…QLREVPRAPE (112 aa)) form a VCR 1 region. Phosphoserine occurs at positions 329, 425, and 429. The interval 457–496 (EETPEATEDERDEERGGMEAMESCKGSSNGAQDGEASEKG) is disordered. Residues 458-468 (ETPEATEDERD) show a composition bias toward acidic residues. Threonine 463 carries the phosphothreonine modification. Residues 506 to 553 (YLFKCLVNIKKEAGDAVVEMHWVEGQNRDLMNQLCTYVRNQILRLVAS) are VCR 2.

The protein belongs to the methyltransferase superfamily. METTL16/RlmF family. In terms of assembly, interacts with MEPCE. Interacts with LARP7.

Its subcellular location is the nucleus. It localises to the cytoplasm. It carries out the reaction adenosine in U6 snRNA + S-adenosyl-L-methionine = N(6)-methyladenosine in U6 snRNA + S-adenosyl-L-homocysteine + H(+). It catalyses the reaction an adenosine in mRNA + S-adenosyl-L-methionine = an N(6)-methyladenosine in mRNA + S-adenosyl-L-homocysteine + H(+). Methyltransferase activity is autoinhibited by the K-loop region that blocks S-adenosyl-L-methionine-binding. Upon activation, K-loop changes conformation, allowing S-adenosyl-L-methionine-binding and subsequent methyltransferase activity. mRNA N6-adenosine-methyltransferase activity is inhibited by zinc. Its function is as follows. RNA N6-methyltransferase that methylates adenosine residues at the N(6) position of a subset of RNAs and is involved in S-adenosyl-L-methionine homeostasis by regulating expression of MAT2A transcripts. Able to N6-methylate a subset of mRNAs and U6 small nuclear RNAs (U6 snRNAs). In contrast to the METTL3-METTL14 heterodimer, only able to methylate a limited number of RNAs: requires both a 5'UACAGAGAA-3' nonamer sequence and a specific RNA structure. Plays a key role in S-adenosyl-L-methionine homeostasis by mediating N6-methylation of MAT2A mRNAs, altering splicing of MAT2A transcripts: in presence of S-adenosyl-L-methionine, binds the 3'-UTR region of MAT2A mRNA and specifically N6-methylates the first hairpin of MAT2A mRNA, preventing recognition of their 3'-splice site by U2AF1/U2AF35, thereby inhibiting splicing and protein production of S-adenosylmethionine synthase. In S-adenosyl-L-methionine-limiting conditions, binds the 3'-UTR region of MAT2A mRNA but stalls due to the lack of a methyl donor, preventing N6-methylation and promoting expression of MAT2A. In addition to mRNAs, also able to mediate N6-methylation of U6 small nuclear RNA (U6 snRNA): specifically N6-methylates adenine in position 43 of U6 snRNAs. Also able to bind various lncRNAs, such as 7SK snRNA (7SK RNA) or 7SL RNA. Specifically binds the 3'-end of the MALAT1 long non-coding RNA. The polypeptide is RNA N(6)-adenosine-methyltransferase METTL16 (Mus musculus (Mouse)).